Consider the following 60-residue polypeptide: Large ribosomal subunit protein bL32A (60 aa).

Positions M1–Q19 are enriched in basic residues. A disordered region spans residues M1 to K21.

It belongs to the bacterial ribosomal protein bL32 family.

The protein is Large ribosomal subunit protein bL32A of Nocardia farcinica (strain IFM 10152).